The following is a 75-amino-acid chain: U6-lycotoxin-Ls1e (75 aa).

The signal sequence occupies residues 1 to 21 (MKLLLFTALVLVVISLIEVEA). Positions 22–25 (ENER) are excised as a propeptide.

It belongs to the neurotoxin 19 (CSTX) family. 06 (U6-Lctx) subfamily. Post-translationally, contains 4 disulfide bonds. In terms of tissue distribution, expressed by the venom gland.

The protein localises to the secreted. The protein is U6-lycotoxin-Ls1e of Lycosa singoriensis (Wolf spider).